A 138-amino-acid chain; its full sequence is Large ribosomal subunit protein uL16 (138 aa).

Residues 1–17 (MLIPRKVKHRKQHHPKQ) show a composition bias toward basic residues. Residues 1-24 (MLIPRKVKHRKQHHPKQRGIASGG) are disordered.

Belongs to the universal ribosomal protein uL16 family. In terms of assembly, part of the 50S ribosomal subunit.

Its function is as follows. Binds 23S rRNA and is also seen to make contacts with the A and possibly P site tRNAs. This Mycolicibacterium vanbaalenii (strain DSM 7251 / JCM 13017 / BCRC 16820 / KCTC 9966 / NRRL B-24157 / PYR-1) (Mycobacterium vanbaalenii) protein is Large ribosomal subunit protein uL16.